Here is a 433-residue protein sequence, read N- to C-terminus: Serine--tRNA ligase (433 aa).

Thr239–Glu241 contributes to the L-serine binding site. ATP is bound at residue Arg270–Glu272. Residue Glu293 participates in L-serine binding. Glu357 to Ser360 provides a ligand contact to ATP. Residue Ser393 participates in L-serine binding.

Belongs to the class-II aminoacyl-tRNA synthetase family. Type-1 seryl-tRNA synthetase subfamily. As to quaternary structure, homodimer. The tRNA molecule binds across the dimer.

Its subcellular location is the cytoplasm. It carries out the reaction tRNA(Ser) + L-serine + ATP = L-seryl-tRNA(Ser) + AMP + diphosphate + H(+). It catalyses the reaction tRNA(Sec) + L-serine + ATP = L-seryl-tRNA(Sec) + AMP + diphosphate + H(+). It functions in the pathway aminoacyl-tRNA biosynthesis; selenocysteinyl-tRNA(Sec) biosynthesis; L-seryl-tRNA(Sec) from L-serine and tRNA(Sec): step 1/1. Its function is as follows. Catalyzes the attachment of serine to tRNA(Ser). Is also able to aminoacylate tRNA(Sec) with serine, to form the misacylated tRNA L-seryl-tRNA(Sec), which will be further converted into selenocysteinyl-tRNA(Sec). The sequence is that of Serine--tRNA ligase from Sorangium cellulosum (strain So ce56) (Polyangium cellulosum (strain So ce56)).